The chain runs to 304 residues: Small ribosomal subunit protein uS2 (304 aa).

Serine 2 carries the N-acetylserine modification. Laminin-binding stretches follow at residues 161–180 (IPCN…MLAR) and 205–229 (RDPE…EFQG). [DE]-W-[ST] repeat units follow at residues 230-232 (EWS), 245-247 (DWS), 275-277 (DWS), 284-286 (DWS), and 302-304 (DWS). Residues 242–304 (EVADWSEGVA…DWGGATSDWS (63 aa)) are laminin-binding. The tract at residues 257–304 (IQQFPAGTPAPAPAVKTEDWSTQPATEDWSTAPTAQASDWGGATSDWS) is disordered. The span at 276 to 293 (WSTQPATEDWSTAPTAQA) shows a compositional bias: polar residues.

This sequence belongs to the universal ribosomal protein uS2 family. Monomer (37LRP) and homodimer (67LR). Component of the small ribosomal subunit. Mature ribosomes consist of a small (40S) and a large (60S) subunit. The 40S subunit contains about 33 different proteins and 1 molecule of RNA (18S). The 60S subunit contains about 49 different proteins and 3 molecules of RNA (28S, 5.8S and 5S). Interacts with rps21. Interacts with several laminins including at least lamb1. Interacts with mdk. Post-translationally, acylated. Acylation may be a prerequisite for conversion of the monomeric 37 kDa laminin receptor precursor (37LRP) to the mature dimeric 67 kDa laminin receptor (67LR), and may provide a mechanism for membrane association. Cleaved by stromelysin-3 (ST3) at the cell surface. Cleavage by stromelysin-3 may be a mechanism to alter cell-extracellular matrix interactions.

It is found in the cell membrane. The protein localises to the cytoplasm. The protein resides in the nucleus. Required for the assembly and/or stability of the 40S ribosomal subunit. Required for the processing of the 20S rRNA-precursor to mature 18S rRNA in a late step of the maturation of 40S ribosomal subunits. Also functions as a cell surface receptor for laminin. Plays a role in cell adhesion to the basement membrane and in the consequent activation of signaling transduction pathways. May play a role in cell fate determination and tissue morphogenesis. This chain is Small ribosomal subunit protein uS2 (rpsa), found in Sparus aurata (Gilthead sea bream).